The primary structure comprises 128 residues: uncharacterized protein (128 aa).

The tract at residues 24 to 43 (KRTQNNTEQASRAINSPLQS) is disordered. Polar residues predominate over residues 26 to 43 (TQNNTEQASRAINSPLQS).

This is an uncharacterized protein from Homo sapiens (Human).